A 236-amino-acid chain; its full sequence is Peptidase E (236 aa).

Catalysis depends on charge relay system residues Ser-122, Asp-137, and His-159.

The protein belongs to the peptidase S51 family.

It localises to the cytoplasm. It catalyses the reaction Dipeptidase E catalyzes the hydrolysis of dipeptides Asp-|-Xaa. It does not act on peptides with N-terminal Glu, Asn or Gln, nor does it cleave isoaspartyl peptides.. Functionally, hydrolyzes dipeptides containing N-terminal aspartate residues. May play a role in allowing the cell to use peptide aspartate to spare carbon otherwise required for the synthesis of the aspartate family of amino acids. This chain is Peptidase E, found in Shewanella sp. (strain ANA-3).